The following is a 772-amino-acid chain: A type blood N-acetyl-alpha-D-galactosamine deacetylase (772 aa).

An N-terminal signal peptide occupies residues 1-27 (MRNRRKAVSLLTGLLVTAQLFPTAALA). Substrate-binding residues include Ser-87 and His-123. A divalent metal cation is bound at residue Asp-126. The segment at 180–402 (WSKPTSDAER…WRIGYAENSF (223 aa)) is deacetylase activity. Tyr-236 provides a ligand contact to substrate. His-278 contributes to the a divalent metal cation binding site. The F5/8 type C domain maps to 494–605 (SDDLEIAVVE…KDLVASGSDW (112 aa)). Positions 502–765 (VENPYTLIPQ…VCVSPVVDFD (264 aa)) are CBM32 carbohydrate-binding domain. The not required for activity on soluble substrates stretch occupies residues 515–772 (TATATSVYGG…DFDYFSYVGE (258 aa)).

A divalent metal cation serves as cofactor.

The enzyme catalyses an N-acetyl-alpha-D-galactosaminyl-(1-&gt;3)-[alpha-L-fucosyl-(1-&gt;2)]-beta-D-galactosyl derivative + H2O = an alpha-D-galactosaminyl-(1-&gt;3)-[alpha-L-fucosyl-(1-&gt;2)]-beta-D-galactosyl derivative + acetate. With respect to regulation, inhibited by EDTA. Functionally, one of an enzyme pair that work together to convert the A antigen to the H antigen of the O blood type, which together release galactosamine. Catalyzes the first step in the conversion, generating the substrate for the subsequent enzyme (FpGalNase, AC P0DTR5). Works on many different A antigen subtypes. Glu-90 probably activates a nucleophilic water molecule to start the deacetylation reaction. In Flavonifractor plautii (Fusobacterium plautii), this protein is A type blood N-acetyl-alpha-D-galactosamine deacetylase.